A 388-amino-acid polypeptide reads, in one-letter code: Probable proton-coupled zinc antiporter SLC30A3 (388 aa).

Residues 1–46 (MEPSPAAGGLETTRLVSPRDRGGAGGSLRLKSLFTEPSEPLPEESK) are disordered. The Cytoplasmic segment spans residues 1–75 (MEPSPAAGGL…TPERLHARRQ (75 aa)). Residues 76–96 (LYAACAVCFVFMAGEVVGGYL) traverse the membrane as a helical segment. The Lumenal segment spans residues 97–105 (AHSLAIMTD). A helical transmembrane segment spans residues 106-126 (AAHLLADVGSMMGSLFSLWLS). The Zn(2+) site is built by histidine 108 and aspartate 112. The Cytoplasmic portion of the chain corresponds to 127-145 (TRPATRTMTFGWHRSETLG). Residues 146–166 (ALASVVSLWMVTGILLYLAFV) form a helical membrane-spanning segment. Topologically, residues 167-177 (RLLHSDYHIEG) are lumenal. A helical membrane pass occupies residues 178–198 (GAMLLTASIAVCANLLMAFVL). Topologically, residues 199–235 (HQAGPPHSHGSRGAEYAPLEEGPEEPLPLGNTSVRAA) are cytoplasmic. A helical membrane pass occupies residues 236–256 (FVHVLGDLLQSFGVLAASILI). Zn(2+) is bound by residues histidine 238 and aspartate 242. The Lumenal portion of the chain corresponds to 257–264 (YFKPQYKA). The chain crosses the membrane as a helical span at residues 265-285 (ADPISTFLFSICALGSTAPTL). The Cytoplasmic segment spans residues 286 to 388 (RDVLRILMEG…CLRCQEPPQA (103 aa)). Tyrosine 357 is covalently cross-linked (Dityrosine (Tyr-Tyr) (interchain with Y-372)). Tyrosine 372 is covalently cross-linked (Dityrosine (Tyr-Tyr) (interchain with Y-357)).

Belongs to the cation diffusion facilitator (CDF) transporter (TC 2.A.4) family. SLC30A subfamily. Homodimer; dityrosine-linked. Homodimerization seems specific of the human protein and enhances the zinc transport efficiency. Interacts with TMEM163. Post-translationally, homodimerization through dityrosine bonds is stimulated by oxidative stress.

It is found in the cytoplasmic vesicle. The protein localises to the secretory vesicle. It localises to the synaptic vesicle membrane. The protein resides in the synapse. Its subcellular location is the synaptosome. It is found in the late endosome membrane. The protein localises to the lysosome membrane. It catalyses the reaction Zn(2+)(in) + 2 H(+)(out) = Zn(2+)(out) + 2 H(+)(in). Its function is as follows. Probable proton-coupled zinc ion antiporter mediating the import of zinc from cytoplasm into synaptic vesicles and participating to cellular zinc ion homeostasis in the brain. This Homo sapiens (Human) protein is Probable proton-coupled zinc antiporter SLC30A3.